We begin with the raw amino-acid sequence, 315 residues long: MIVAPVVLSIFLQLFVQAAQPWKALDPEQALYVYKRCYEDHLPAGSSRVTYLKSWNAWKLEPNDAVTHCYAKCVLIGLQLYEEKDKAFKSERIPVQHEAYKTLNEANSREVTEYQQALASINAGDGSCVALYNAYLPVHNKFVDLSRKLYHGTVEGAAKIYAAMPQIKQKGESFFAYCAKKIWGGYNKKEWKRGRNYELSGSSQFKKVIDCIFRGLRYMDDSGLKVDEVVRDFNLINKSDLEPEVRSVLASCTGTQAYDYYSCLLNSPVKEDFKNAFDFHELRSADYAFLLRGKVYEGPEQVKEEMKHLNTTVHF.

The signal sequence occupies residues 1-18; that stretch reads MIVAPVVLSIFLQLFVQA. 4 disulfide bridges follow: cysteine 37-cysteine 73, cysteine 69-cysteine 128, cysteine 178-cysteine 211, and cysteine 252-cysteine 263.

It belongs to the PBP/GOBP family. Interacts with host coagulation factor XII/F12 (inactive and activated). Interacts with host coagulation factor XI/F11 (inactive).

The protein localises to the secreted. Functionally, modulates blood feeding of female mosquitoes on vertebrate species by binding and sequestering different mediators involved in the host response. Binds leukotriene B4 and leukotriene D4. Exhibits anticoagulant activity targeting the intrinsic coagulation pathway; binds coagulation factors XII and XI, preventing generation of activated FXIIa and FXIa. In Anopheles gambiae (African malaria mosquito), this protein is Long form salivary protein D7L2.